Here is a 377-residue protein sequence, read N- to C-terminus: MALMMKSSASLKAVSAGRSRRAVVVRAGKYDEELIKTAGTVASKGRGILAMDESNATCGKRLDSIGVENTEENRRAYRELLVTAPGLGQYISGAILFEETLYQSTASGKKFVDVMKEQNIVPGIKVDKGLVPLSNTNGESWCMGLDGLDKRCAEYYKAGARFAKWRSVVSIPHGPSIIAARDCAYGLARYAAIAQNAGLVPIVEPEVLLDGEHDIDRCLEVQEAIWAETFKYMADNKVMFEGILLKPAMVTPGADCKNKAGPAKVAEYTLKMLRRRVPPAVPGIMFLSGGQSELESTLNLNAMNQSPNPWHVSFSYARALQNTVLKTWQGKPENVQAAQAALLKRAKANSDAQQGKYDATTEGKEAAQGMYEKGYVY.

R74 and K164 together coordinate substrate. E204 functions as the Proton acceptor in the catalytic mechanism. The Schiff-base intermediate with dihydroxyacetone-P role is filled by K246.

This sequence belongs to the class I fructose-bisphosphate aldolase family.

It localises to the plastid. The protein resides in the chloroplast. The catalysed reaction is beta-D-fructose 1,6-bisphosphate = D-glyceraldehyde 3-phosphate + dihydroxyacetone phosphate. It participates in carbohydrate degradation; glycolysis; D-glyceraldehyde 3-phosphate and glycerone phosphate from D-glucose: step 4/4. In Chlamydomonas reinhardtii (Chlamydomonas smithii), this protein is Fructose-bisphosphate aldolase 1, chloroplastic (ALDCHL).